Here is a 210-residue protein sequence, read N- to C-terminus: Thymidylate kinase (210 aa).

ATP is bound at residue 14-21 (GLDRSGKS).

It belongs to the thymidylate kinase family.

The catalysed reaction is dTMP + ATP = dTDP + ADP. It participates in pyrimidine metabolism; dTTP biosynthesis. Catalyzes the conversion of dTMP to dTDP. In Schizosaccharomyces pombe (strain 972 / ATCC 24843) (Fission yeast), this protein is Thymidylate kinase (tmp1).